Consider the following 304-residue polypeptide: Endonuclease III-like protein 1 (304 aa).

A mitochondrion-targeting transit peptide spans 1 to 22; sequence MTALSARMLTRSRSLGPGAGPR. The disordered stretch occupies residues 1–72; the sequence is MTALSARMLT…SDSEKGEGAE (72 aa). Positions 23–42 are enriched in basic and acidic residues; the sequence is GCREEPGPLRRREAAAEARK. Positions 28–52 match the Bipartite nuclear localization signal motif; that stretch reads PGPLRRREAAAEARKSHSPVKRPRK. Over residues 43-55 the composition is skewed to basic residues; it reads SHSPVKRPRKAQR. Residues S63 and S65 each carry the phosphoserine modification. The region spanning 191-215 is the HhH domain; that stretch reads HYGGDIPASVAELVALPGVGPKMAH. The active-site Nucleophile; for N-glycosylase activity is the K212. [4Fe-4S] cluster contacts are provided by C282, C289, C292, and C298.

It belongs to the Nth/MutY family. In terms of assembly, interacts with YBX1. Interacts with ERCC5/XPG; the interaction stimulates NTHL1 activity and NTHL1 binding to its DNA substrate. The cofactor is [4Fe-4S] cluster. In terms of processing, ubiquitinated by TRIM26; leading to proteasomal degradation. As to expression, widely expressed with highest levels in heart and lowest levels in lung and liver.

It is found in the nucleus. It localises to the mitochondrion. The enzyme catalyses 2'-deoxyribonucleotide-(2'-deoxyribose 5'-phosphate)-2'-deoxyribonucleotide-DNA = a 3'-end 2'-deoxyribonucleotide-(2,3-dehydro-2,3-deoxyribose 5'-phosphate)-DNA + a 5'-end 5'-phospho-2'-deoxyribonucleoside-DNA + H(+). With respect to regulation, APE1 displaces NTHL1 from the N-glycosylase-generated AP site in DNA, thereby increasing the turnover of the DNA N-glycosylase activity. AP lyase activity is stimulated by YBX1. ERCC5/XPG stimulates NTHL1 activity and NTHL1 binding to its DNA substrate. Functionally, bifunctional DNA N-glycosylase with associated apurinic/apyrimidinic (AP) lyase function that catalyzes the first step in base excision repair (BER), the primary repair pathway for the repair of oxidative DNA damage. The DNA N-glycosylase activity releases the damaged DNA base from DNA by cleaving the N-glycosidic bond, leaving an AP site. The AP-lyase activity cleaves the phosphodiester bond 3' to the AP site by a beta-elimination. Primarily recognizes and repairs oxidative base damage of pyrimidines. Also has 8-oxo-7,8-dihydroguanine (8-oxoG) DNA glycosylase activity. Acts preferentially on DNA damage opposite guanine residues in DNA. Is able to process lesions in nucleosomes without requiring or inducing nucleosome disruption. The chain is Endonuclease III-like protein 1 from Homo sapiens (Human).